The following is a 91-amino-acid chain: Putative regulatory protein CLB_2388 (91 aa).

This sequence belongs to the RemA family.

The sequence is that of Putative regulatory protein CLB_2388 from Clostridium botulinum (strain ATCC 19397 / Type A).